A 147-amino-acid polypeptide reads, in one-letter code: Hemoglobin subunit beta-1 (147 aa).

The Globin domain maps to 3–147; the sequence is HWTDFERSTI…VVFSLGKQYH (145 aa). Positions 64 and 93 each coordinate heme b.

Belongs to the globin family. As to quaternary structure, hb1 is a heterotetramer of two alpha-1 chains and two beta-1 chains. As to expression, red blood cells.

Its function is as follows. Involved in oxygen transport from gills to the various peripheral tissues. The chain is Hemoglobin subunit beta-1 from Liparis tunicatus (Kelp snailfish).